The following is a 790-amino-acid chain: MATTKQKVTAPSPSPSSSTASCCPSTSILRREATAAIAVVGDGLQNWTNIPSVDEKQKKTASSALASLPTTEPLSTNTSTKGIQIMTRAQTCHPLDPLSAAEISVAVATVRAAGETPEVRDGMRFIEVVLVEPDKSVVALADAYFFPPFQSSLMPRTKGGSQIPTKLPPRRARLIVYNKKTNETSIWIVELNEVHAAARGGHHRGKVIASNVVPDVQPPIDAQEYAECEAVVKSYPPFRDAMRRRGIDDLDLVMVDPWCVGYHSEADAPSRRLAKPLVFCRTESDCPMENGYARPVEGIYVLVDVQNMQIIEFEDRKLVPLPPVDPLRNYTAGETRGGVDRSDVKPLHIIQPEGPSFRISGNYVEWQKWNFRIGFTPREGLVIHSVAYLDGSRGRRPIAHRLSFVEMVVPYGDPNDPHYRKNAFDAGEDGLGKNAHSLKRGCDCLGYIKYFDAHFTNFTGGVETTENCVCLHEEDHGMLWKHQDWRTGLAEVRRSRRLTVSFVCTVANYEYAFYWHFYQDGKIEAEVKLTGILSLGALQPGEYRKYGTTILPGLYAPVHQHFFVARMNMAVDCKPGEAHNQVVEVNVKVEEPGKENVHNNAFYAEETLLRSELQAMRDCDPFSARHWIVRNTRTVNRTGQLTGYKLVPGPNCLPLAGPEAKFLRRAAFLKHNLWVTQYAPGEDFPGGEFPNQNPRVGEGLASWVKQDRPLEESDIVLWYIFGITHVPRLEDWPVMPVEHIGFVLQPHGYFNCSPAVDVPPPFACDSESRDSDVTETSVAKSTATSLLAKL.

The interval 1-23 (MATTKQKVTAPSPSPSSSTASCC) is disordered. The span at 9-23 (TAPSPSPSSSTASCC) shows a compositional bias: low complexity. 423–434 (AFDAGEDGLGKN) provides a ligand contact to substrate. Asp-425 serves as the catalytic Proton acceptor. An intrachain disulfide couples Cys-444 to Cys-470. Position 506-511 (506-511 (VANYEY)) interacts with substrate. Residue Tyr-509 is the Schiff-base intermediate with substrate; via topaquinone of the active site. Tyr-509 carries the post-translational modification 2',4',5'-topaquinone. Cu cation contacts are provided by His-559 and His-561. Asp-714 and Ile-715 together coordinate Mn(2+). Residue His-725 coordinates Cu cation.

This sequence belongs to the copper/topaquinone oxidase family. In terms of assembly, homodimer. It depends on Cu cation as a cofactor. Zn(2+) serves as cofactor. Requires L-topaquinone as cofactor. Topaquinone (TPQ) is generated by copper-dependent autoxidation of a specific tyrosyl residue. Mainly expressed in roots, and, to a lower extent, in stems.

It localises to the peroxisome. The catalysed reaction is a primary methyl amine + O2 + H2O = an aldehyde + H2O2 + NH4(+). It carries out the reaction N-methylputrescine + O2 + H2O = 4-methylaminobutanal + H2O2 + NH4(+). Its pathway is alkaloid biosynthesis; nicotine biosynthesis. In terms of biological role, involved in the biosynthesis of pyridine alkaloid natural products, leading mainly to the production of anabasine, anatabine, nicotine and nornicotine, effective deterrents against herbivores with antiparasitic and pesticide properties (neurotoxins); nornicotine serves as the precursor in the synthesis of the carcinogen compound N'-nitrosonornicotine (NNN). Amine oxidase which mediates the deamination of N-methylputrescine to produce 4-methylaminobutanal. Oxidizes preferentially N-methylated amines. In Nicotiana tabacum (Common tobacco), this protein is N-methylputrescine oxidase 1, peroxisomal.